The following is a 243-amino-acid chain: MKAKLIAATEIDPGALRDIGFEVDDFEESKDEDPYFGDFDADELAEFAGRNCYRSFHRPNPATAENEDYLNHIIDLGHESVFEHASATFYIEASRSVLTELERHRHLSFSVVSQRYVDPTDLGIHLPPALFKLHPDDRDDLVHIMESVSSEIDAVYEHIVNRLADRGLPRKQAREAARAVLPNMTNSPMVVTGNHRAWRYVIKARWHEAADAEIRELAGELLRQLRQIAPNTYQDIPDVPYSY.

The region spanning 21–239 is the ThyX domain; that stretch reads FEVDDFEESK…PNTYQDIPDV (219 aa). Residues serine 80 and 103-105 each bind FAD; that span reads RHR. Residues 100–103, 113–115, and arginine 178 contribute to the dUMP site; these read ELER and SQR. Residues 103–113 carry the ThyX motif motif; sequence RHRHLSFSVVS. 194–196 contributes to the FAD binding site; that stretch reads NHR. Arginine 205 contributes to the dUMP binding site. Residue arginine 205 is the Involved in ionization of N3 of dUMP, leading to its activation of the active site.

The protein belongs to the thymidylate synthase ThyX family. As to quaternary structure, homotetramer. FAD is required as a cofactor.

The catalysed reaction is dUMP + (6R)-5,10-methylene-5,6,7,8-tetrahydrofolate + NADPH + H(+) = dTMP + (6S)-5,6,7,8-tetrahydrofolate + NADP(+). Its pathway is pyrimidine metabolism; dTTP biosynthesis. Its function is as follows. Catalyzes the reductive methylation of 2'-deoxyuridine-5'-monophosphate (dUMP) to 2'-deoxythymidine-5'-monophosphate (dTMP) while utilizing 5,10-methylenetetrahydrofolate (mTHF) as the methyl donor, and NADPH and FADH(2) as the reductant. The protein is Probable flavin-dependent thymidylate synthase (48) of Mycobacterium phage L5 (Mycobacteriophage L5).